The primary structure comprises 693 residues: Tegument protein UL47 (693 aa).

Disordered stretches follow at residues 1–32 (MSAREPAGRRRRASTRPRASPVADEPAGDGVG) and 48–126 (ELEA…GYLG). Positions 48-57 (ELEALEEMAG) are enriched in acidic residues. Positions 50 to 75 (EALEEMAGDEPPVRRRREGPRARRRR) are RNA-binding. Residues 63-75 (RRRREGPRARRRR) carry the Nuclear localization signal motif. Residues 63-75 (RRRREGPRARRRR) are compositionally biased toward basic residues. The Nuclear export signal motif lies at 647 to 670 (SVLGPGVRVVDIMSQFRKLLMGDE).

It belongs to the alphaherpesvirinae HHV-1 UL47 family. In terms of assembly, interacts with US3 kinase. Interacts with UL31 and UL34; these interactions seem important for efficient virion nuclear egress. Interacts with UL41/VHS. Phosphorylated by US3. This phosphorylation is required for proper nuclear localization.

Its subcellular location is the virion tegument. The protein localises to the host nucleus. The protein resides in the host cytoplasm. Its function is as follows. Tegument protein that can bind to various RNA transcripts. Plays a role in the attenuation of selective viral and cellular mRNA degradation by modulating the activity of host shutoff RNase UL41/VHS. Also plays a role in the primary envelopment of virions in the perinuclear space, probably by interacting with two nuclear egress proteins UL31 and UL34. The polypeptide is Tegument protein UL47 (Human herpesvirus 1 (strain F) (HHV-1)).